Consider the following 609-residue polypeptide: Membrane-bound O-acyltransferase GUP2 (609 aa).

An N-terminal signal peptide occupies residues 1–18 (MSMLRIWSCIVHFFSVQA). Residues 19–75 (LDSRIKPDIEFKRRQRIFINSSKEENGSSSSAVTVTRNPVLSSNSPSPPLWNTWEFR) lie on the Lumenal side of the membrane. A helical transmembrane segment spans residues 76-96 (LYYLAFTVVVPFMIKAALATS). Residues 97 to 133 (SESNPNYYKFSGLLAHGWILGRKVDNSDPQYRFFRSN) lie on the Cytoplasmic side of the membrane. A helical membrane pass occupies residues 134-154 (FFLLAILILLQIILKKVFVKF). Topologically, residues 155-169 (SKIPKTKFDFACGLV) are lumenal. A helical transmembrane segment spans residues 170–190 (FVCFMYGINSVKLFTHAFIFF). The Cytoplasmic portion of the chain corresponds to 191–200 (TLAHSLKRKR). A helical transmembrane segment spans residues 201–221 (LIAAFAIWSYGIFTLFINQKM). The Lumenal segment spans residues 222 to 324 (KNLPFNNIAI…VAEHHIQDYN (103 aa)). A helical membrane pass occupies residues 325-345 (FINFIAYITYAPLFLVGPIIT). Residues 346–371 (FNDYLYQSENKLPSLTKKNIGFYALK) are Cytoplasmic-facing. Residues 372–392 (VFSSLLLMEIILHYIYVGAIA) form a helical membrane-spanning segment. Topologically, residues 393–406 (RTKAWNNDTPLQQA) are lumenal. A helical membrane pass occupies residues 407-427 (MIALFNLNIMYLKLLIPWRLF). The Cytoplasmic segment spans residues 428-474 (RLWAMVDGIDAPENMLRCVDNNYSTVGFWRAWHTSFNKWVIRYIYVP). The chain crosses the membrane as a helical span at residues 475 to 495 (FGGSNNKILTSFAVFSFVAIW). His-496 is an active-site residue. Topologically, residues 496–502 (HDIQLRV) are lumenal. Residues 503–523 (LFWGWLTVLLLLGETYITNCF) traverse the membrane as a helical segment. Over 524–533 (SRYRFRSWYR) the chain is Cytoplasmic. A helical membrane pass occupies residues 534–554 (FVCGIGAAINICMMMIINVYG). The Lumenal segment spans residues 555 to 575 (FCLGAEGTKLLLKGIFNNSHS). A helical transmembrane segment spans residues 576 to 596 (PEFLTAVMVSLFIAVQVMFEI). The Cytoplasmic segment spans residues 597–609 (REEEKRHGINLKC).

The protein belongs to the membrane-bound acyltransferase family.

It is found in the endoplasmic reticulum membrane. Probable membrane-bound O-acyltransferase. Together with GUP1, has an influence on the chemical composition of the yeast extracellular matrix (yECM) in yeast multicellular aggregates, such as biofilms and colonies. The polypeptide is Membrane-bound O-acyltransferase GUP2 (GUP2) (Saccharomyces cerevisiae (strain ATCC 204508 / S288c) (Baker's yeast)).